We begin with the raw amino-acid sequence, 621 residues long: tRNA uridine 5-carboxymethylaminomethyl modification enzyme MnmG (621 aa).

9 to 14 lines the FAD pocket; the sequence is GGGHAG. 270 to 284 provides a ligand contact to NAD(+); the sequence is GPRYCPSIEDKIVKF.

The protein belongs to the MnmG family. As to quaternary structure, homodimer. Heterotetramer of two MnmE and two MnmG subunits. FAD is required as a cofactor.

The protein localises to the cytoplasm. In terms of biological role, NAD-binding protein involved in the addition of a carboxymethylaminomethyl (cmnm) group at the wobble position (U34) of certain tRNAs, forming tRNA-cmnm(5)s(2)U34. In Borrelia garinii subsp. bavariensis (strain ATCC BAA-2496 / DSM 23469 / PBi) (Borreliella bavariensis), this protein is tRNA uridine 5-carboxymethylaminomethyl modification enzyme MnmG.